Consider the following 237-residue polypeptide: Glutathione S-transferase psoE (237 aa).

The region spanning 2 to 79 is the GST N-terminal domain; that stretch reads VFGTLYTFPG…YITSQNEQTT (78 aa). Arg37, Lys49, Val50, Glu63, Cys64, and Asn99 together coordinate glutathione. Lys49 serves as a coordination point for substrate. The 139-residue stretch at 84–222 folds into the GST C-terminal domain; sequence DKKEYAEIIK…NNPPEKKPET (139 aa). Position 108 (Gln108) interacts with substrate. The span at 208 to 222 shows a compositional bias: basic and acidic residues; that stretch reads EPKLTNNPPEKKPET. A disordered region spans residues 208–237; that stretch reads EPKLTNNPPEKKPETVPKNGAAVAIEATQA.

The protein belongs to the GST superfamily. Requires glutathione as cofactor.

It functions in the pathway secondary metabolite biosynthesis. In terms of biological role, glutathione S-transferase; part of the gene cluster that mediates the biosynthesis of pseurotin A, a competitive inhibitor of chitin synthase and an inducer of nerve-cell proliferation. The PKS-NRPS hybrid synthetase psoA is responsible for the biosynthesis of azaspirene, one of the first intermediates having the 1-oxa-7-azaspiro[4,4]-non-2-ene-4,6-dione core of pseurotin, via condensation of one acetyl-CoA, 4 malonyl-CoA, and a L-phenylalanine molecule. The dual-functional monooxygenase/methyltransferase psoF seems to be involved in the addition of the C3 methyl group onto the pseurotin scaffold. Azaspirene is then converted to synerazol through 4 steps including oxidation of C17 by the cytochrome P450 monooxygenase psoD, O-methylation of the hydroxy group of C8 by the methyltransferase psoC, and the trans-to-cis isomerization of the C13 olefin by the glutathione S-transferase psoE. The fourth step of synerazol production is performed by the dual-functional monooxygenase/methyltransferase psoF which seems to catalyze the epoxidation of the intermediate deepoxy-synerazol. Synerazol can be attacked by a water molecule nonenzymatically at two different positions to yield two diol products, pseurotin A and pseurotin D. In Aspergillus fumigatus (strain ATCC MYA-4609 / CBS 101355 / FGSC A1100 / Af293) (Neosartorya fumigata), this protein is Glutathione S-transferase psoE.